Consider the following 64-residue polypeptide: Small ribosomal subunit protein bS21 (64 aa).

It belongs to the bacterial ribosomal protein bS21 family.

In Pelagibacter ubique (strain HTCC1062), this protein is Small ribosomal subunit protein bS21.